Consider the following 944-residue polypeptide: Leucine--tRNA ligase (944 aa).

The 'HIGH' region motif lies at 40–51 (PYPSGAGLHVGH). Positions 718 to 722 (KMSKS) match the 'KMSKS' region motif. Residue Lys-721 participates in ATP binding.

This sequence belongs to the class-I aminoacyl-tRNA synthetase family.

The protein localises to the cytoplasm. The enzyme catalyses tRNA(Leu) + L-leucine + ATP = L-leucyl-tRNA(Leu) + AMP + diphosphate. The polypeptide is Leucine--tRNA ligase (Bacteroides thetaiotaomicron (strain ATCC 29148 / DSM 2079 / JCM 5827 / CCUG 10774 / NCTC 10582 / VPI-5482 / E50)).